The chain runs to 621 residues: UvrABC system protein C (621 aa).

Residues 13–92 form the GIY-YIG domain; that stretch reads NEPGVYLMKN…IKKYSPKYNI (80 aa). Positions 204–239 constitute a UVR domain; sequence RSLLNKLKEEMQSASGNLEFEKAASLRDKMIAIENI.

It belongs to the UvrC family. As to quaternary structure, interacts with UvrB in an incision complex.

The protein localises to the cytoplasm. Its function is as follows. The UvrABC repair system catalyzes the recognition and processing of DNA lesions. UvrC both incises the 5' and 3' sides of the lesion. The N-terminal half is responsible for the 3' incision and the C-terminal half is responsible for the 5' incision. The protein is UvrABC system protein C of Clostridium beijerinckii (strain ATCC 51743 / NCIMB 8052) (Clostridium acetobutylicum).